An 868-amino-acid chain; its full sequence is Leucine--tRNA ligase (868 aa).

The 'HIGH' region motif lies at 42–52; it reads PYPSGKLHMGH. Residues 627 to 631 carry the 'KMSKS' region motif; that stretch reads KMSKS. Lysine 630 is an ATP binding site.

The protein belongs to the class-I aminoacyl-tRNA synthetase family.

The protein resides in the cytoplasm. The catalysed reaction is tRNA(Leu) + L-leucine + ATP = L-leucyl-tRNA(Leu) + AMP + diphosphate. The sequence is that of Leucine--tRNA ligase from Pseudomonas putida (strain W619).